Here is a 429-residue protein sequence, read N- to C-terminus: RNA-binding protein BRN2 (429 aa).

RRM domains lie at 12–93, 100–180, and 330–408; these read VKLF…YADG, HKLF…WADT, and ANLF…LKRD. Positions 410–429 are disordered; sequence GQQQQQQQSKNPLFNGLLNS. Residues 418–429 are compositionally biased toward polar residues; it reads SKNPLFNGLLNS.

As to expression, expressed in roots, stems, flowers and siliques.

It is found in the cytoplasm. RNA-binding protein involved in the regulation of flowering time. Acts as a repressor of the activity of SOC1, a transcriptional activator of flowering time. Binds to the 3'-UTR of SOC1 mRNA in the cytoplasm and participates in SOC1 mRNA decay, mediated by the distal region of the SOC1 3'-UTR. The sequence is that of RNA-binding protein BRN2 from Arabidopsis thaliana (Mouse-ear cress).